The primary structure comprises 2176 residues: Methyl-CpG-binding domain-containing protein 9 (2176 aa).

A compositionally biased stretch (polar residues) spans 1-13 (MEPTDSTNEQLGD). Disordered regions lie at residues 1–20 (MEPT…AAVK) and 28–85 (GIDL…RDAS). A PHD-type 1 zinc finger spans residues 83-133 (DASCGACGRPESIELVVVCDACERGFHMSCVNDGVEAAPSADWMCSDCRTG). The segment at 86–131 (CGACGRPESIELVVVCDACERGFHMSCVNDGVEAAPSADWMCSDCR) adopts an RING-type 1; degenerate zinc-finger fold. The MBD domain occupies 258 to 327 (RHFISERHGV…MDAEIRNENS (70 aa)). Residues 403–456 (GCPMQFEDFFVLSLGRIDIRQSYHNVNVIYPIGYKSCWHDKITGSLFTCEVSDG) enclose the FYR N-terminal domain. Residues 491 to 511 (EQNSDKLSNRRDSTQERDDDA) are a coiled coil. One can recognise an FYR C-terminal domain in the interval 550 to 698 (SSRVDFDKNL…ESCTNYRTLK (149 aa)). Short sequence motifs (nuclear localization signal) lie at residues 914-921 (SRRGRKKD), 1124-1131 (KKRTYISV), and 1256-1263 (YRKLECLS). A Pumilio repeat occupies 1098–1137 (PTKKAVLSLLADIRGGDLVQRSIKGTKKRTYISVSDVIMK). The region spanning 1130 to 1245 (SVSDVIMKKC…EKFKSLYEAE (116 aa)) is the Bromo domain. Positions 1251–1273 (QKLKDYRKLECLSAEMKKEIKDI) form a coiled coil. Residues 1287–1337 (EGVCKVCGVDKDDDSVLLCDTCDAEYHTYCLNPPLIRIPDGNWYCPSCVIA) form a PHD-type 2 zinc finger. An RING-type 2; degenerate zinc finger spans residues 1290-1335 (CKVCGVDKDDDSVLLCDTCDAEYHTYCLNPPLIRIPDGNWYCPSCV). The short motif at 1337–1344 (AKRMAQEA) is the Nuclear localization signal element. Residues 1410 to 1437 (QHLEQCAEAIIEMQQKLRSLSSEWKNAK) adopt a coiled-coil conformation. Disordered regions lie at residues 1472 to 1553 (GCDP…NLPE) and 1565 to 1595 (GRNH…QELQ). 3 stretches are compositionally biased toward polar residues: residues 1492–1513 (SSTA…TQPG), 1523–1532 (KISSPETISS), and 1585–1595 (DASSQASQELQ). Residues 1588–1628 (SQASQELQACQQDLSATSNEIQNLQQSIRSIESQLLKQSIR) are a coiled coil. Positions 1761-1768 (EKRYGPCI) match the Nuclear localization signal motif. The interval 2136–2176 (IDETKPIISLPDQKSQPVSDSQERSSRVRRSGKKRKEPEGS) is disordered.

As to quaternary structure, interacts with histone H4. Expressed in leaves, buds, flowers and stems.

Its subcellular location is the nucleus. The catalysed reaction is L-lysyl-[protein] + acetyl-CoA = N(6)-acetyl-L-lysyl-[protein] + CoA + H(+). Its function is as follows. Probable transcriptional regulator that acts as a histone acetyltransferase. Mediates the acetylation of histone H3 and H4 of target loci (e.g. FLC). Involved in an auxin-independent regulation of shoot branching and flowering time. This chain is Methyl-CpG-binding domain-containing protein 9 (MBD9), found in Arabidopsis thaliana (Mouse-ear cress).